A 402-amino-acid polypeptide reads, in one-letter code: Dynactin subunit 2 (402 aa).

The tract at residues 1–24 is disordered; that stretch reads MADPKYADLPGIARNEPDVYETSD. N-acetylalanine is present on Ala-2. Phosphotyrosine is present on Tyr-6. Phosphoserine is present on Ser-83. Tyr-86 is modified (phosphotyrosine). The stretch at 100 to 130 forms a coiled coil; sequence QQKYQRLLHEVQELTTEVEKIKTTVKESATE. Thr-134 and Thr-199 each carry phosphothreonine. The disordered stretch occupies residues 185–205; that stretch reads KSSKGSSGGKSTGGTPPDSSL. Positions 215–247 form a coiled coil; that stretch reads EQDKFSQAAKVAELEKRLTELEATVRCDQDAQN. Residue Ser-321 is modified to Phosphoserine.

It belongs to the dynactin subunit 2 family. Subunit of dynactin, a multiprotein complex part of a tripartite complex with dynein and a adapter, such as BICDL1, BICD2 or HOOK3. The dynactin complex is built around ACTR1A/ACTB filament and consists of an actin-related filament composed of a shoulder domain, a pointed end and a barbed end. Its length is defined by its flexible shoulder domain. The soulder is composed of 2 DCTN1 subunits, 4 DCTN2 and 2 DCTN3. The 4 DCNT2 (via N-terminus) bind the ACTR1A filament and act as molecular rulers to determine the length. The pointed end is important for binding dynein-dynactin cargo adapters and consists of 4 subunits: ACTR10, DCNT4, DCTN5 and DCTN6. The barbed end is composed of a CAPZA1:CAPZB heterodimers, which binds ACTR1A/ACTB filament and dynactin and stabilizes dynactin. Interacts with BICD2 and CEP135. Interacts with DYNAP. Interacts with ECPAS. Interacts with MAPRE1.

The protein localises to the cytoplasm. It is found in the cytoskeleton. It localises to the microtubule organizing center. The protein resides in the centrosome. Its subcellular location is the membrane. Functionally, part of the dynactin complex that activates the molecular motor dynein for ultra-processive transport along microtubules. In the dynactin soulder domain, binds the ACTR1A filament and acts as a molecular ruler to determine the length. Modulates cytoplasmic dynein binding to an organelle, and plays a role in prometaphase chromosome alignment and spindle organization during mitosis. Involved in anchoring microtubules to centrosomes. May play a role in synapse formation during brain development. The chain is Dynactin subunit 2 (Dctn2) from Rattus norvegicus (Rat).